A 736-amino-acid polypeptide reads, in one-letter code: Probable methionine--tRNA ligase, cytoplasmic (736 aa).

A 'HIGH' region motif is present at residues 25 to 35; sequence PYVNNVPHLGN. Residues 346-350 carry the 'KMSKS' region motif; it reads KFSKS. Residue lysine 349 coordinates ATP. A tRNA-binding domain is found at 573-680; it reads PEFPIDMKIA…QSIEAGSKIA (108 aa).

The protein belongs to the class-I aminoacyl-tRNA synthetase family.

The protein resides in the cytoplasm. The enzyme catalyses tRNA(Met) + L-methionine + ATP = L-methionyl-tRNA(Met) + AMP + diphosphate. This is Probable methionine--tRNA ligase, cytoplasmic (metS) from Dictyostelium discoideum (Social amoeba).